The following is an 869-amino-acid chain: Dynamin-3 (869 aa).

Residues 28–294 (LLELPQIAVV…LTNHIRDTLP (267 aa)) enclose the Dynamin-type G domain. The G1 motif stretch occupies residues 38–45 (GGQSAGKS). 38 to 46 (GGQSAGKSS) contributes to the GTP binding site. Residues 64–66 (VTR) form a G2 motif region. The interval 136-139 (DLPG) is G3 motif. The interval 205-208 (TKLD) is G4 motif. 205 to 211 (TKLDLMD) provides a ligand contact to GTP. Tyr231 carries the post-translational modification Phosphotyrosine. Residues 235–238 (VNRS) form a G5 motif region. Residue 236–239 (NRSQ) coordinates GTP. The residue at position 299 (Lys299) is an N6-acetyllysine. In terms of domain architecture, PH spans 525–631 (IVIRKGWLTV…WKASLLRAGV (107 aa)). A Phosphotyrosine modification is found at Tyr603. Lys604 is subject to N6-acetyllysine. A GED domain is found at 659 to 750 (VETIRNLVDS…IIGDINTVTV (92 aa)). Residues 752–869 (TPAPPPVDDS…IRPLESSLLD (118 aa)) form a disordered region. Phosphoserine is present on residues Ser769 and Ser773. Positions 775–796 (TTQRRLTLSAPLPRPASSRGPA) are enriched in low complexity. Pro residues-rich tracts occupy residues 797-822 (PAIP…PPFP) and 832-855 (PQVP…PSPT). Phosphoserine is present on Ser853.

It belongs to the TRAFAC class dynamin-like GTPase superfamily. Dynamin/Fzo/YdjA family. In terms of tissue distribution, isoform-specific expression in germ-cell-depleted testis (Sertoli cells), brain (peripheral sensory neurons), lung and heart.

It is found in the cytoplasm. It localises to the cytoskeleton. The protein resides in the cytoplasmic vesicle. Its subcellular location is the golgi apparatus. It catalyses the reaction GTP + H2O = GDP + phosphate + H(+). Its function is as follows. Microtubule-associated force-producing protein involved in producing microtubule bundles and able to bind and hydrolyze GTP. Most probably involved in vesicular trafficking processes, in particular endocytosis. The polypeptide is Dynamin-3 (Dnm3) (Rattus norvegicus (Rat)).